The primary structure comprises 64 residues: Large ribosomal subunit protein bL35 (64 aa).

Basic residues predominate over residues 1-26; the sequence is MPKIKTHRGAAKRFKKTGTGKIKRSK. The tract at residues 1–48 is disordered; sequence MPKIKTHRGAAKRFKKTGTGKIKRSKAYASHLLGGKSPKRKRNLRKAG.

It belongs to the bacterial ribosomal protein bL35 family.

The sequence is that of Large ribosomal subunit protein bL35 from Syntrophomonas wolfei subsp. wolfei (strain DSM 2245B / Goettingen).